A 290-amino-acid polypeptide reads, in one-letter code: Elongation factor Ts, mitochondrial 1 (290 aa).

The protein belongs to the EF-Ts family.

The protein localises to the mitochondrion. Associates with the EF-Tu.GDP complex and induces the exchange of GDP to GTP. It remains bound to the aminoacyl-tRNA.EF-Tu.GTP complex up to the GTP hydrolysis stage on the ribosome. The chain is Elongation factor Ts, mitochondrial 1 from Postia placenta (strain ATCC 44394 / Madison 698-R) (Brown rot fungus).